We begin with the raw amino-acid sequence, 152 residues long: Large ribosomal subunit protein uL30 (152 aa).

The protein belongs to the universal ribosomal protein uL30 family. Part of the 50S ribosomal subunit.

This Archaeoglobus fulgidus (strain ATCC 49558 / DSM 4304 / JCM 9628 / NBRC 100126 / VC-16) protein is Large ribosomal subunit protein uL30.